We begin with the raw amino-acid sequence, 2528 residues long: Squalestatin tetraketide synthase clz2 (2528 aa).

In terms of domain architecture, Ketosynthase family 3 (KS3) spans 14–409; sequence TVPIAIVGMS…GANAHVILES (396 aa). Catalysis depends on for beta-ketoacyl synthase activity residues C187, H291, and H331. The interval 420–457 is disordered; that stretch reads VNGHHQKNGTTNGHKGANGTTNELNGTNGTANGHDITT. The segment covering 436 to 452 has biased composition (low complexity); the sequence is ANGTTNELNGTNGTANG. The malonyl-CoA:ACP transacylase (MAT) domain stretch occupies residues 538–856; that stretch reads GAQWFAMGRE…PYLSCLLRGQ (319 aa). Positions 925–1063 are N-terminal hotdog fold; that stretch reads HDLLGSLIPG…GRIAIELDTS (139 aa). The PKS/mFAS DH domain occupies 925-1239; it reads HDLLGSLIPG…NQSVGQIALQ (315 aa). Positions 925–1239 are dehydratase (DH) domain; sequence HDLLGSLIPG…NQSVGQIALQ (315 aa). Catalysis depends on H957, which acts as the Proton acceptor; for dehydratase activity. The segment at 1083-1239 is C-terminal hotdog fold; sequence TRSVDPSNLY…NQSVGQIALQ (157 aa). D1148 functions as the Proton donor; for dehydratase activity in the catalytic mechanism. A methyltransferase (CMet) domain region spans residues 1390–1590; that stretch reads LYRYYTDAIK…GLDVELRDCD (201 aa). The enoyl reductase (ER) (ER) domain stretch occupies residues 1817–2130; the sequence is GLIDTLQFSK…AGKHMGKIVI (314 aa). A ketoreductase (KR) domain region spans residues 2153–2331; that stretch reads ASYLIVGGLG…AVSIDLGMVQ (179 aa). The interval 2408–2430 is disordered; the sequence is RARDAKEQSNSQGGGTDSKISPG. One can recognise a Carrier domain in the interval 2441 to 2518; it reads EAIDVVGRAI…ALATTVATKS (78 aa). Residue S2478 is modified to O-(pantetheine 4'-phosphoryl)serine.

It participates in secondary metabolite biosynthesis. Its function is as follows. Highly reducing polyketide synthase (HR-PKS); part of the gene cluster that mediates the biosynthesis of squalestatin S1 (SQS1, also known as zaragozic acid A), a heavily oxidized fungal polyketide that offers potent cholesterol lowering activity by targeting squalene synthase (SS). SQS1 is composed of a 2,8-dioxobicyclic[3.2.1]octane-3,4,5-tricarboxyclic acid core that is connected to two lipophilic polyketide arms. These initial steps feature the priming of an unusual benzoic acid starter unit onto the highly reducing polyketide synthase clz14, followed by oxaloacetate extension and product release to generate a tricarboxylic acid containing product. The phenylalanine ammonia lyase (PAL) clz10 and the acyl-CoA ligase clz12 are involved in transforming phenylalanine into benzoyl-CoA. The citrate synthase-like protein clz17 is involved in connecting the C-alpha-carbons of the hexaketide chain and oxaloacetate to afford the tricarboxylic acid unit. The potential hydrolytic enzymes, clz11 and clz13, are in close proximity to pks2 and may participate in product release. On the other side, the tetraketide arm is synthesized by a the squalestatin tetraketide synthase clz2 and enzymatically esterified to the core in the last biosynthetic step, by the acetyltransferase clz6. The biosynthesis of the tetraketide must involve 3 rounds of chain extension. After the first and second rounds methyl-transfer occurs, and in all rounds of extension the ketoreductase and dehydratase are active. The enoyl reductase and C-MeT of clz2 are not active in the final round of extension. The acetyltransferase clz6 appears to have a broad substrate selectivity for its acyl CoA substrate, allowing the in vitro synthesis of novel squalestatins. The biosynthesis of SQS1 requires several oxidative steps likely performed by oxidoreductases clz3, clz15 and clz16. Finally, in support of the identification of the cluster as being responsible for SQS1 production, the cluster contains a gene encoding a putative squalene synthase (SS) clz20, suggesting a likely mechanism for self-resistance. This is Squalestatin tetraketide synthase clz2 from Cochliobolus lunatus (Filamentous fungus).